Consider the following 670-residue polypeptide: Catalase (670 aa).

Catalysis depends on residues His61 and Asn132. Residue Tyr345 coordinates heme.

The protein belongs to the catalase family. Homotetramer. Heme is required as a cofactor.

Its subcellular location is the peroxisome matrix. The enzyme catalyses 2 H2O2 = O2 + 2 H2O. Catalyzes the degradation of hydrogen peroxide (H(2)O(2)) generated by peroxisomal oxidases to water and oxygen, thereby protecting cells from the toxic effects of hydrogen peroxide. This Penicillium janthinellum (Penicillium vitale) protein is Catalase.